A 76-amino-acid polypeptide reads, in one-letter code: Alpha/kappa-conotoxin-like fe14.2 (76 aa).

A signal peptide spans 1–24 (MPSVRSVTCCCLLWMMLSVQLVTP). Positions 25 to 39 (GSPGTAQLSGQRTAR) are excised as a propeptide. Disulfide bonds link Cys46–Cys61 and Cys50–Cys63. Arg64 carries the post-translational modification Arginine amide. A propeptide spanning residues 65 to 76 (GKRDVVSSSMAV) is cleaved from the precursor.

Belongs to the conotoxin J superfamily. As to expression, expressed by the venom duct.

It is found in the secreted. Functionally, highly inhibits both nicotinic acetylcholine receptors (neuronal (alpha-3/beta-4) and muscular (alpha-1/beta-1/epsilon/delta) subtypes) and the voltage-gated potassium channel Kv1.6/KCNA6 subtype. In Conus ferrugineus (Cone snail), this protein is Alpha/kappa-conotoxin-like fe14.2.